Consider the following 351-residue polypeptide: Tsukushi-A (351 aa).

The first 17 residues, 1 to 17 (MALSSWIFFLLVHGIVG), serve as a signal peptide directing secretion. LRR repeat units follow at residues 59–82 (PLDT…VLSG), 85–108 (YTTL…TFSK), 109–132 (LRYL…SFLY), 134–155 (RLTE…AFTL), 158–181 (QGRS…AERP), 182–203 (VPNI…DLHG), 204–226 (IPLR…SFLG), 252–276 (LTSL…MFFG), and 277–300 (LKAL…IMLH).

In terms of assembly, interacts with bmp4. Interacts with dll1 (via extracellular region). Interacts with fgf8; inhibits fgf8 signaling. Interacts with nodal2/Xnr2; enhances nodal2 activity. As to expression, during embryogenesis, localized to the animal hemisphere during late blastula and gastrula stages. At stage 10, expression is also detected around the dorsal blastopore lip. Expressed in the mandibular crest segment, branchial crest segment and differentiating somites at stage 21/22. Expressed in the germ ring including the shield at shield stage and in the tailbud at the 10-somite stage. At the early neurula stage (stage 13), expression is hardly detectable in the presumptive neural plate region, and restricted to the non-neural ectoderm where its levels increase by stage 14, especially in the presumptive anterior neural fold. Also expressed in the prospective cranial neural crest. At the early tailbud stage (stage 23), expressed in cranial neural crest cells, the dorsal retina and the lens placode.

It is found in the secreted. Contributes to various developmental events through its interactions with multiple signaling pathways. Dorsalizing factor which functions as an inhibitor of bone morphogenetic proteins (BMP) during gastrulation. Promotes dll1-dependent activation of Notch signaling and is required for neural crest formation. Induces endoderm and dorsal mesoderm formation by enhancing nodal2/Xnr2 activity while inhibiting ventrolateral mesoderm formation through inhibition of fgf8. The chain is Tsukushi-A from Xenopus laevis (African clawed frog).